The sequence spans 157 residues: Small ribosomal subunit protein uS9 (157 aa).

Belongs to the universal ribosomal protein uS9 family.

The protein is Small ribosomal subunit protein uS9 of Caulobacter sp. (strain K31).